A 400-amino-acid polypeptide reads, in one-letter code: Cysteine desulfurase 1 (400 aa).

Pyridoxal 5'-phosphate contacts are provided by residues 71-72 (GT), Asn-150, Gln-178, and 198-200 (SGH). Lys-201 carries the N6-(pyridoxal phosphate)lysine modification. Residue Thr-236 coordinates pyridoxal 5'-phosphate. Cys-324 serves as the catalytic Cysteine persulfide intermediate. Cys-324 serves as a coordination point for [2Fe-2S] cluster.

Belongs to the class-V pyridoxal-phosphate-dependent aminotransferase family. NifS/IscS subfamily. Homodimer. Pyridoxal 5'-phosphate is required as a cofactor.

It carries out the reaction (sulfur carrier)-H + L-cysteine = (sulfur carrier)-SH + L-alanine. Its function is as follows. Catalyzes the removal of elemental sulfur atoms from cysteine to produce alanine. Seems to participate in the biosynthesis of the nitrogenase metalloclusters by providing the inorganic sulfur required for the Fe-S core formation. This is Cysteine desulfurase 1 from Trichormus variabilis (strain ATCC 29413 / PCC 7937) (Anabaena variabilis).